The chain runs to 272 residues: Eukaryotic translation initiation factor 3 subunit G (272 aa).

2 disordered regions span residues 1–28 (MPAL…PTEI) and 143–187 (AGKA…RGRD). An RRM domain is found at 190–268 (TAIRISNLSE…LILNVEWSKP (79 aa)).

This sequence belongs to the eIF-3 subunit G family. Component of the eukaryotic translation initiation factor 3 (eIF-3) complex.

Its subcellular location is the cytoplasm. RNA-binding component of the eukaryotic translation initiation factor 3 (eIF-3) complex, which is involved in protein synthesis of a specialized repertoire of mRNAs and, together with other initiation factors, stimulates binding of mRNA and methionyl-tRNAi to the 40S ribosome. The eIF-3 complex specifically targets and initiates translation of a subset of mRNAs involved in cell proliferation. This subunit can bind 18S rRNA. The protein is Eukaryotic translation initiation factor 3 subunit G of Culex quinquefasciatus (Southern house mosquito).